The sequence spans 323 residues: L-lactate dehydrogenase (323 aa).

3 residues coordinate NAD(+): valine 11, aspartate 32, and tyrosine 63. Substrate is bound by residues glutamine 80 and arginine 86. NAD(+)-binding positions include serine 99, 116–118 (VSN), and serine 141. Substrate is bound at residue 118 to 121 (NPVD). 146–149 (DTAR) lines the substrate pocket. Beta-D-fructose 1,6-bisphosphate is bound by residues arginine 151 and histidine 166. The active-site Proton acceptor is histidine 173. Tyrosine 221 carries the phosphotyrosine modification. Position 230 (threonine 230) interacts with substrate.

It belongs to the LDH/MDH superfamily. LDH family. In terms of assembly, homotetramer.

It is found in the cytoplasm. The enzyme catalyses (S)-lactate + NAD(+) = pyruvate + NADH + H(+). It functions in the pathway fermentation; pyruvate fermentation to lactate; (S)-lactate from pyruvate: step 1/1. Allosterically activated by fructose 1,6-bisphosphate (FBP). Functionally, catalyzes the conversion of lactate to pyruvate. This Kosmotoga olearia (strain ATCC BAA-1733 / DSM 21960 / TBF 19.5.1) protein is L-lactate dehydrogenase.